Reading from the N-terminus, the 64-residue chain is MPKAKTHSGASKRFRRTGTGKIVRQKANRRHLFEHKPSTRTRRLDGHTRVSANDTQRVNSLLNG.

2 disordered regions span residues 1–22 and 34–64; these read MPKA…TGKI and EHKP…LLNG. Residues 34–48 show a composition bias toward basic and acidic residues; it reads EHKPSTRTRRLDGHT. Positions 50–64 are enriched in polar residues; it reads VSANDTQRVNSLLNG.

This sequence belongs to the bacterial ribosomal protein bL35 family.

The protein is Large ribosomal subunit protein bL35 of Mycobacterium leprae (strain Br4923).